We begin with the raw amino-acid sequence, 156 residues long: Ribosomal RNA large subunit methyltransferase H (156 aa).

Residues L73, G104, and L123 to L128 each bind S-adenosyl-L-methionine.

Belongs to the RNA methyltransferase RlmH family. In terms of assembly, homodimer.

The protein localises to the cytoplasm. It carries out the reaction pseudouridine(1915) in 23S rRNA + S-adenosyl-L-methionine = N(3)-methylpseudouridine(1915) in 23S rRNA + S-adenosyl-L-homocysteine + H(+). In terms of biological role, specifically methylates the pseudouridine at position 1915 (m3Psi1915) in 23S rRNA. This chain is Ribosomal RNA large subunit methyltransferase H, found in Aliivibrio salmonicida (strain LFI1238) (Vibrio salmonicida (strain LFI1238)).